The chain runs to 732 residues: Elongation factor 2 (732 aa).

One can recognise a tr-type G domain in the interval 19 to 260; it reads ERIRNIGIAA…MVVKHLPNPI (242 aa). GTP-binding positions include 28–35, 94–98, and 148–151; these read AHIDHGKT, DTPGH, and NKVD. Diphthamide is present on histidine 597.

The protein belongs to the TRAFAC class translation factor GTPase superfamily. Classic translation factor GTPase family. EF-G/EF-2 subfamily.

Its subcellular location is the cytoplasm. Its function is as follows. Catalyzes the GTP-dependent ribosomal translocation step during translation elongation. During this step, the ribosome changes from the pre-translocational (PRE) to the post-translocational (POST) state as the newly formed A-site-bound peptidyl-tRNA and P-site-bound deacylated tRNA move to the P and E sites, respectively. Catalyzes the coordinated movement of the two tRNA molecules, the mRNA and conformational changes in the ribosome. This chain is Elongation factor 2 (fusA), found in Pyrococcus abyssi (strain GE5 / Orsay).